The following is a 220-amino-acid chain: MFNSQITSQRSSQVSSQSSATGIESALVPMVVEQTAKGERSYDIYSRLLKERVIFLCGQVEDHMANLIIAQLLFLESESPDKDIYLYINSPGGSVTAGMAIYDTMKFIKPNISTVCIGQAASMGAFLLSGGEKGKRYCLPNARVMIHQPLGGFQGQASDFEIHAKEILFIKDKLNKLMAEHTGQTLDKVSQDTDRDNFLSAEAAVEYGLVDSILEQRNDK.

Serine 122 serves as the catalytic Nucleophile. Histidine 147 is a catalytic residue.

The protein belongs to the peptidase S14 family. In terms of assembly, fourteen ClpP subunits assemble into 2 heptameric rings which stack back to back to give a disk-like structure with a central cavity, resembling the structure of eukaryotic proteasomes.

It localises to the cytoplasm. It catalyses the reaction Hydrolysis of proteins to small peptides in the presence of ATP and magnesium. alpha-casein is the usual test substrate. In the absence of ATP, only oligopeptides shorter than five residues are hydrolyzed (such as succinyl-Leu-Tyr-|-NHMec, and Leu-Tyr-Leu-|-Tyr-Trp, in which cleavage of the -Tyr-|-Leu- and -Tyr-|-Trp bonds also occurs).. Its function is as follows. Cleaves peptides in various proteins in a process that requires ATP hydrolysis. Has a chymotrypsin-like activity. Plays a major role in the degradation of misfolded proteins. In Colwellia psychrerythraea (strain 34H / ATCC BAA-681) (Vibrio psychroerythus), this protein is ATP-dependent Clp protease proteolytic subunit.